A 769-amino-acid polypeptide reads, in one-letter code: PDZ domain-containing protein 4 (769 aa).

One can recognise a PDZ domain in the interval 130-214 (EVELYKSSHR…TNISLLVARP (85 aa)). The disordered stretch occupies residues 221–315 (RWKDSDRDDF…TNTPGSLRKF (95 aa)). The span at 229 to 239 (DFLDDFGSENE) shows a compositional bias: acidic residues. Ser-236 bears the Phosphoserine mark. Residues 282-298 (RTDESTRNEESSEHDLL) are compositionally biased toward basic and acidic residues. A coiled-coil region spans residues 389–419 (VNRNESLGHEMAMLEEELRHLEFKCRNILRA). The interval 445 to 579 (ASEPKKHELS…RHRGQGQEGE (135 aa)) is disordered. Basic and acidic residues predominate over residues 447–467 (EPKKHELSDISELPEKSDKDS). A Phosphoserine modification is found at Ser-454. The span at 468–479 (TSAYNTGESCRS) shows a compositional bias: polar residues. Over residues 530 to 547 (LSRDPEAGRRQHAEERGR) the composition is skewed to basic and acidic residues.

Brain-specific. Expressed in fetal and adult brain. Up-regulated in synovial carcinomas.

It is found in the cytoplasm. The protein resides in the cell cortex. The polypeptide is PDZ domain-containing protein 4 (PDZD4) (Homo sapiens (Human)).